The chain runs to 312 residues: ADP-L-glycero-D-manno-heptose-6-epimerase (312 aa).

NADP(+)-binding positions include 10 to 11, 31 to 32, Lys-38, Lys-53, 75 to 79, and Asn-92; these read FI, DN, and EGACS. The Proton acceptor role is filled by Tyr-140. Lys-144 contacts NADP(+). A substrate-binding site is contributed by Asn-169. NADP(+) is bound by residues Val-170 and Lys-178. The Proton acceptor role is filled by Lys-178. Substrate is bound by residues Ser-180, His-187, 201 to 204, Arg-209, and Tyr-274; that span reads FEGS.

Belongs to the NAD(P)-dependent epimerase/dehydratase family. HldD subfamily. In terms of assembly, homopentamer. NADP(+) serves as cofactor.

It carries out the reaction ADP-D-glycero-beta-D-manno-heptose = ADP-L-glycero-beta-D-manno-heptose. It functions in the pathway nucleotide-sugar biosynthesis; ADP-L-glycero-beta-D-manno-heptose biosynthesis; ADP-L-glycero-beta-D-manno-heptose from D-glycero-beta-D-manno-heptose 7-phosphate: step 4/4. Catalyzes the interconversion between ADP-D-glycero-beta-D-manno-heptose and ADP-L-glycero-beta-D-manno-heptose via an epimerization at carbon 6 of the heptose. In Proteus mirabilis (strain HI4320), this protein is ADP-L-glycero-D-manno-heptose-6-epimerase.